The chain runs to 364 residues: Protein-glutamate methylesterase/protein-glutamine glutaminase (364 aa).

Positions Arg5–Asn123 constitute a Response regulatory domain. Asp56 is modified (4-aspartylphosphate). One can recognise a CheB-type methylesterase domain in the interval Glu174–Tyr364. Active-site residues include Ser181, His208, and Asp306.

This sequence belongs to the CheB family. Post-translationally, phosphorylated by CheA. Phosphorylation of the N-terminal regulatory domain activates the methylesterase activity.

It localises to the cytoplasm. It carries out the reaction [protein]-L-glutamate 5-O-methyl ester + H2O = L-glutamyl-[protein] + methanol + H(+). The enzyme catalyses L-glutaminyl-[protein] + H2O = L-glutamyl-[protein] + NH4(+). Its function is as follows. Involved in chemotaxis. Part of a chemotaxis signal transduction system that modulates chemotaxis in response to various stimuli. Catalyzes the demethylation of specific methylglutamate residues introduced into the chemoreceptors (methyl-accepting chemotaxis proteins or MCP) by CheR. Also mediates the irreversible deamidation of specific glutamine residues to glutamic acid. The polypeptide is Protein-glutamate methylesterase/protein-glutamine glutaminase (Desulfotalea psychrophila (strain LSv54 / DSM 12343)).